The following is a 160-amino-acid chain: SsrA-binding protein (160 aa).

It belongs to the SmpB family.

The protein localises to the cytoplasm. Functionally, required for rescue of stalled ribosomes mediated by trans-translation. Binds to transfer-messenger RNA (tmRNA), required for stable association of tmRNA with ribosomes. tmRNA and SmpB together mimic tRNA shape, replacing the anticodon stem-loop with SmpB. tmRNA is encoded by the ssrA gene; the 2 termini fold to resemble tRNA(Ala) and it encodes a 'tag peptide', a short internal open reading frame. During trans-translation Ala-aminoacylated tmRNA acts like a tRNA, entering the A-site of stalled ribosomes, displacing the stalled mRNA. The ribosome then switches to translate the ORF on the tmRNA; the nascent peptide is terminated with the 'tag peptide' encoded by the tmRNA and targeted for degradation. The ribosome is freed to recommence translation, which seems to be the essential function of trans-translation. The protein is SsrA-binding protein of Mycobacterium bovis (strain ATCC BAA-935 / AF2122/97).